A 140-amino-acid chain; its full sequence is Pro-variola growth factor (140 aa).

The first 18 residues, 1-18 (MSMKYLMLLFAAMIIRSF), serve as a signal peptide directing secretion. Topologically, residues 19–100 (ANSGNAIETT…SEKPNTTTSY (82 aa)) are extracellular. N-linked (GlcNAc...) asparagine; by host glycosylation is present at Asn-34. One can recognise an EGF-like domain in the interval 41–81 (AIRLCGPEGNGYCFHGICIHARDIDGMYCRCSHGYTGIRCQ). 3 disulfide bridges follow: Cys-45-Cys-58, Cys-53-Cys-69, and Cys-71-Cys-80. Asn-95 carries N-linked (GlcNAc...) asparagine; by host glycosylation. The helical transmembrane segment at 101-121 (IPSPGIVLVLLVSIIMCCLLF) threads the bilayer. The Cytoplasmic segment spans residues 122-140 (VYRFTRRTNKLPLQDMVVP).

The protein belongs to the orthopoxvirus OPG019 family. As to quaternary structure, variola growth factor interacts with host EGFR and promotes EGFR dimerization.

It is found in the host membrane. Its subcellular location is the secreted. Functionally, stimulates cellular proliferation (hyperplasia)and mobility around infected cells to promote rapid and efficient spread of infection. This effect is beneficial for virus replication in vivo, because poxviruses replicate possibly better in proliferating cells than in quiescent cells. Acts by binding host EGFR, inducing its dimerization, autophosphorylation and leading to activation of several cellular pathways regulating cell proliferation or cell survival. The activation by host EGFR of mitogen activated protein kinases (MAPK) and extracellular-signal regulated kinases (ERK) are essential for the positive effect of vaccinia growth factor on poxvirus virulence in vivo. In Variola virus, this protein is Pro-variola growth factor (OPG019).